The primary structure comprises 286 residues: tRNA (guanine-N(7)-)-methyltransferase (286 aa).

The disordered stretch occupies residues 1-21; sequence MTNPESTAIDPVAAMGTDHTE. S-adenosyl-L-methionine is bound by residues glutamate 91, glutamate 116, asparagine 143, and aspartate 165. The active site involves aspartate 165. Substrate is bound by residues lysine 169, aspartate 201, and 262 to 265; that span reads TNFE.

Belongs to the class I-like SAM-binding methyltransferase superfamily. TrmB family.

It carries out the reaction guanosine(46) in tRNA + S-adenosyl-L-methionine = N(7)-methylguanosine(46) in tRNA + S-adenosyl-L-homocysteine. The protein operates within tRNA modification; N(7)-methylguanine-tRNA biosynthesis. Its function is as follows. Catalyzes the formation of N(7)-methylguanine at position 46 (m7G46) in tRNA. This Bifidobacterium longum (strain NCC 2705) protein is tRNA (guanine-N(7)-)-methyltransferase.